Reading from the N-terminus, the 476-residue chain is Chromosomal replication initiator protein DnaA (476 aa).

Residues 1–87 (MSDRSDPTHA…AGVSNFAIVV (87 aa)) form a domain I, interacts with DnaA modulators region. The interval 87–131 (VNPGIAQDAFAQHPEPAEQPYIETPTITAPTDNPGLPASPSRGDS) is domain II. The tract at residues 132–348 (RLNPKYGFDT…GTLIRVTAFA (217 aa)) is domain III, AAA+ region. Positions 176, 178, 179, and 180 each coordinate ATP. The interval 349 to 476 (SLNKTPVDLA…IKQNHRYGKM (128 aa)) is domain IV, binds dsDNA.

It belongs to the DnaA family. Oligomerizes as a right-handed, spiral filament on DNA at oriC.

The protein resides in the cytoplasm. Its function is as follows. Plays an essential role in the initiation and regulation of chromosomal replication. ATP-DnaA binds to the origin of replication (oriC) to initiate formation of the DNA replication initiation complex once per cell cycle. Binds the DnaA box (a 9 base pair repeat at the origin) and separates the double-stranded (ds)DNA. Forms a right-handed helical filament on oriC DNA; dsDNA binds to the exterior of the filament while single-stranded (ss)DNA is stabiized in the filament's interior. The ATP-DnaA-oriC complex binds and stabilizes one strand of the AT-rich DNA unwinding element (DUE), permitting loading of DNA polymerase. After initiation quickly degrades to an ADP-DnaA complex that is not apt for DNA replication. Binds acidic phospholipids. This chain is Chromosomal replication initiator protein DnaA, found in Clavibacter sepedonicus (Clavibacter michiganensis subsp. sepedonicus).